A 638-amino-acid polypeptide reads, in one-letter code: Probable potassium transport system protein Kup (638 aa).

A disordered region spans residues M1–H20. Transmembrane regions (helical) follow at residues I24–L44, I67–I87, A115–I135, P153–M173, V181–I201, L228–Y248, W263–L283, L301–I321, I353–F373, A382–V402, A413–V433, and I435–T455.

This sequence belongs to the HAK/KUP transporter (TC 2.A.72) family.

The protein resides in the cell inner membrane. It carries out the reaction K(+)(in) + H(+)(in) = K(+)(out) + H(+)(out). Its function is as follows. Transport of potassium into the cell. Likely operates as a K(+):H(+) symporter. The protein is Probable potassium transport system protein Kup of Azoarcus sp. (strain BH72).